The chain runs to 66 residues: Cytochrome c oxidase subunit 26, mitochondrial (66 aa).

A mitochondrion-targeting transit peptide spans 1–8; the sequence is MFFSQVLR. Residues 9-27 are Mitochondrial matrix-facing; the sequence is SSARAAPIKRYTGGRIGES. A helical transmembrane segment spans residues 28–64; sequence WVITEGRRLIPEIFQWSAVLSVCLGWPGAVYFFSKAR. Over 65–66 the chain is Mitochondrial intermembrane; that stretch reads KA.

This sequence belongs to the fungal cytochrome c oxidase subunit 26 family. In terms of assembly, component of the cytochrome c oxidase (complex IV, CIV), a multisubunit enzyme composed of 12 subunits. The complex is composed of a catalytic core of 3 subunits COX1, COX2 and COX3, encoded in the mitochondrial DNA, and 9 supernumerary subunits COX4, COX5A (or COX5B), COX6, COX7, COX8, COX9, COX12, COX13 and COX26, which are encoded in the nuclear genome. The complex exists as a monomer or a dimer and forms supercomplexes (SCs) in the inner mitochondrial membrane with a dimer of ubiquinol-cytochrome c oxidoreductase (cytochrome b-c1 complex, complex III, CIII), resulting in 2 different assemblies (supercomplexes III(2)IV and III(2)IV(2)).

It is found in the mitochondrion inner membrane. Its function is as follows. Component of the cytochrome c oxidase, the last enzyme in the mitochondrial electron transport chain which drives oxidative phosphorylation. The respiratory chain contains 3 multisubunit complexes succinate dehydrogenase (complex II, CII), ubiquinol-cytochrome c oxidoreductase (cytochrome b-c1 complex, complex III, CIII) and cytochrome c oxidase (complex IV, CIV), that cooperate to transfer electrons derived from NADH and succinate to molecular oxygen, creating an electrochemical gradient over the inner membrane that drives transmembrane transport and the ATP synthase. Cytochrome c oxidase is the component of the respiratory chain that catalyzes the reduction of oxygen to water. Electrons originating from reduced cytochrome c in the intermembrane space (IMS) are transferred via the dinuclear copper A center (CU(A)) of COX2 and heme A of COX1 to the active site in COX1, a binuclear center (BNC) formed by heme A3 and copper B (CU(B)). The BNC reduces molecular oxygen to 2 water molecules using 4 electrons from cytochrome c in the IMS and 4 protons from the mitochondrial matrix. The protein is Cytochrome c oxidase subunit 26, mitochondrial (COX26) of Saccharomyces cerevisiae (strain ATCC 204508 / S288c) (Baker's yeast).